A 231-amino-acid chain; its full sequence is Cytidylate kinase (231 aa).

Position 18–26 (18–26) interacts with ATP; the sequence is GPSGTGKSS.

Belongs to the cytidylate kinase family. Type 1 subfamily.

Its subcellular location is the cytoplasm. The catalysed reaction is CMP + ATP = CDP + ADP. The enzyme catalyses dCMP + ATP = dCDP + ADP. The sequence is that of Cytidylate kinase from Streptomyces griseus subsp. griseus (strain JCM 4626 / CBS 651.72 / NBRC 13350 / KCC S-0626 / ISP 5235).